The following is a 135-amino-acid chain: Ribosome-binding factor A (135 aa).

This sequence belongs to the RbfA family. Monomer. Binds 30S ribosomal subunits, but not 50S ribosomal subunits or 70S ribosomes.

It is found in the cytoplasm. One of several proteins that assist in the late maturation steps of the functional core of the 30S ribosomal subunit. Associates with free 30S ribosomal subunits (but not with 30S subunits that are part of 70S ribosomes or polysomes). Required for efficient processing of 16S rRNA. May interact with the 5'-terminal helix region of 16S rRNA. This Novosphingobium aromaticivorans (strain ATCC 700278 / DSM 12444 / CCUG 56034 / CIP 105152 / NBRC 16084 / F199) protein is Ribosome-binding factor A.